The chain runs to 140 residues: Large ribosomal subunit protein uL22 (140 aa).

A disordered region spans residues 115-140 (AKPAAAKKDPKAAAAKADANAGTKEG).

The protein belongs to the universal ribosomal protein uL22 family. As to quaternary structure, part of the 50S ribosomal subunit.

Its function is as follows. This protein binds specifically to 23S rRNA; its binding is stimulated by other ribosomal proteins, e.g. L4, L17, and L20. It is important during the early stages of 50S assembly. It makes multiple contacts with different domains of the 23S rRNA in the assembled 50S subunit and ribosome. Functionally, the globular domain of the protein is located near the polypeptide exit tunnel on the outside of the subunit, while an extended beta-hairpin is found that lines the wall of the exit tunnel in the center of the 70S ribosome. This chain is Large ribosomal subunit protein uL22, found in Heliobacterium modesticaldum (strain ATCC 51547 / Ice1).